The primary structure comprises 759 residues: MDEQLKQSALDFHEFPVPGKIQVSPTKPLATQRDLALAYSPGVAAPCLEIEKDPLAAYKYTARGNLVAVISNGTAVLGLGNIGALAGKPVMEGKGVLFKKFAGIDVFDIEVDELDPDKFINVVAALEPTFGGINLEDIKAPECFYIEQKLRERMNIPVFHDDQHGTAIISTAAILNGLRVVEKNISDVRMVVSGAGAAAIACMNLLVALGMQKHNIVVCDSKGVIYKGREPNMAETKAAYAVDDSGKRTLDEVIDGADIFLGCSGPKVLTQEMVKKMARAPMILALANPEPEILPPLAKEVRPDAIICTGRSDYPNQVNNVLCFPFIFRGALDVGATAINEEMKLAAVRAIAELAHAEQSEVVASAYGDQDLSFGPEYIIPKPFDPRLIVKIAPAVAKAAMDSGVATRPIADFDAYIDKLTEFVYKTNLFMKPIFSQARKDPKRVVLPEGEEARVLHATQELITLGLAKPILIGRPSVIEMRIQKLGLQIKAGVDFEIVNNESDPRFKEYWSEYYQIMKRRGITQEQAQRAMIGNHTAIGAIMVQRGEADAMICGTIGDYHEHFSVVKAVFGYRDGVHTAGAMNALLLPSGNTFIADTYVNEDPTPEQLAEIAVMAAETVRRFGIEPKVALLSHSNFGSSNSLSASKMRETLERVRERAPDLMIDGEMHGDAALVESIRNDRMPDSPLKGAANILVMPNMEAARISYNLLRVSSSEGVTVGPVLMGVSKPVHVLTPIASVRRIVNMVALAVVEAQTTPL.

A malic enzyme region spans residues 1-428 (MDEQLKQSAL…KLTEFVYKTN (428 aa)). Catalysis depends on Y39, which acts as the Proton donor. Residue K94 is the Proton acceptor of the active site. E136, D137, and D162 together coordinate a divalent metal cation. Residues 195 to 198 (AGAA), N288, and N320 contribute to the NADP(+) site. A phosphate acetyltransferase region spans residues 429–759 (LFMKPIFSQA…AVVEAQTTPL (331 aa)).

The protein in the N-terminal section; belongs to the malic enzymes family. In the C-terminal section; belongs to the phosphate acetyltransferase and butyryltransferase family. The cofactor is Mg(2+). Mn(2+) is required as a cofactor.

The enzyme catalyses (S)-malate + NADP(+) = pyruvate + CO2 + NADPH. It catalyses the reaction oxaloacetate + H(+) = pyruvate + CO2. The chain is NADP-dependent malic enzyme (maeB) from Salmonella typhimurium (strain LT2 / SGSC1412 / ATCC 700720).